The sequence spans 132 residues: Small ribosomal subunit protein uS8 (132 aa).

Belongs to the universal ribosomal protein uS8 family. In terms of assembly, part of the 30S ribosomal subunit. Contacts proteins S5 and S12.

Its function is as follows. One of the primary rRNA binding proteins, it binds directly to 16S rRNA central domain where it helps coordinate assembly of the platform of the 30S subunit. The sequence is that of Small ribosomal subunit protein uS8 from Streptococcus agalactiae serotype Ia (strain ATCC 27591 / A909 / CDC SS700).